Consider the following 405-residue polypeptide: Elongation factor Tu (405 aa).

A tr-type G domain is found at 10 to 213; the sequence is KEHVNVGTIG…AMDEYIPTPQ (204 aa). Residues 19–26 form a G1 region; it reads GHVDHGKS. Residue 19–26 coordinates GTP; sequence GHVDHGKS. A Mg(2+)-binding site is contributed by Ser26. The segment at 64–68 is G2; it reads GITIN. The tract at residues 85-88 is G3; that stretch reads DCPG. GTP is bound by residues 85–89 and 140–143; these read DCPGH and NKCD. The interval 140–143 is G4; that stretch reads NKCD. The G5 stretch occupies residues 178–180; the sequence is SAL.

This sequence belongs to the TRAFAC class translation factor GTPase superfamily. Classic translation factor GTPase family. EF-Tu/EF-1A subfamily. In terms of assembly, monomer.

The protein localises to the cytoplasm. It carries out the reaction GTP + H2O = GDP + phosphate + H(+). In terms of biological role, GTP hydrolase that promotes the GTP-dependent binding of aminoacyl-tRNA to the A-site of ribosomes during protein biosynthesis. The protein is Elongation factor Tu of Aquifex aeolicus (strain VF5).